Consider the following 57-residue polypeptide: Aspartyl-phosphate phosphatase YnzD (57 aa).

It belongs to the spo0E family.

Functionally, aspartyl-phosphate phosphatase which specifically dephosphorylates the sporulation transcription factor Spo0A-P and negatively regulates the sporulation initiation pathway in order to control the proper timing of sporulation. This Bacillus subtilis (strain 168) protein is Aspartyl-phosphate phosphatase YnzD (ynzD).